The primary structure comprises 445 residues: UPF0210 protein SSU05_0296 (445 aa).

The protein belongs to the UPF0210 family. As to quaternary structure, homodimer.

This Streptococcus suis (strain 05ZYH33) protein is UPF0210 protein SSU05_0296.